We begin with the raw amino-acid sequence, 105 residues long: Heat shock protein HspQ (105 aa).

This sequence belongs to the HspQ family.

It localises to the cytoplasm. In terms of biological role, involved in the degradation of certain denaturated proteins, including DnaA, during heat shock stress. The chain is Heat shock protein HspQ from Klebsiella pneumoniae (strain 342).